Reading from the N-terminus, the 366-residue chain is Phospho-N-acetylmuramoyl-pentapeptide-transferase (366 aa).

The next 10 membrane-spanning stretches (helical) occupy residues 27-47, 71-91, 93-113, 138-158, 174-194, 205-225, 245-265, 268-288, 294-314, and 343-363; these read AALF…INSL, TPTM…LLWA, LSNV…AIGF, FVIA…SGIA, FMIN…VGAG, GLAI…AYLA, LAVV…FNAP, AIFM…TVAV, IVMA…IIQV, and QVVI…LSTL.

Belongs to the glycosyltransferase 4 family. MraY subfamily. Mg(2+) is required as a cofactor.

It localises to the cell inner membrane. It carries out the reaction UDP-N-acetyl-alpha-D-muramoyl-L-alanyl-gamma-D-glutamyl-meso-2,6-diaminopimeloyl-D-alanyl-D-alanine + di-trans,octa-cis-undecaprenyl phosphate = di-trans,octa-cis-undecaprenyl diphospho-N-acetyl-alpha-D-muramoyl-L-alanyl-D-glutamyl-meso-2,6-diaminopimeloyl-D-alanyl-D-alanine + UMP. It participates in cell wall biogenesis; peptidoglycan biosynthesis. Functionally, catalyzes the initial step of the lipid cycle reactions in the biosynthesis of the cell wall peptidoglycan: transfers peptidoglycan precursor phospho-MurNAc-pentapeptide from UDP-MurNAc-pentapeptide onto the lipid carrier undecaprenyl phosphate, yielding undecaprenyl-pyrophosphoryl-MurNAc-pentapeptide, known as lipid I. This is Phospho-N-acetylmuramoyl-pentapeptide-transferase from Rhizobium johnstonii (strain DSM 114642 / LMG 32736 / 3841) (Rhizobium leguminosarum bv. viciae).